Reading from the N-terminus, the 436-residue chain is Enolase (436 aa).

Gln-167 provides a ligand contact to (2R)-2-phosphoglycerate. Glu-209 functions as the Proton donor in the catalytic mechanism. Residues Asp-246, Glu-291, and Asp-318 each contribute to the Mg(2+) site. 4 residues coordinate (2R)-2-phosphoglycerate: Lys-343, Arg-372, Ser-373, and Lys-394. Lys-343 serves as the catalytic Proton acceptor.

Belongs to the enolase family. In terms of assembly, component of the RNA degradosome, a multiprotein complex involved in RNA processing and mRNA degradation. Mg(2+) is required as a cofactor.

Its subcellular location is the cytoplasm. It localises to the secreted. The protein localises to the cell surface. It carries out the reaction (2R)-2-phosphoglycerate = phosphoenolpyruvate + H2O. It functions in the pathway carbohydrate degradation; glycolysis; pyruvate from D-glyceraldehyde 3-phosphate: step 4/5. Its function is as follows. Catalyzes the reversible conversion of 2-phosphoglycerate (2-PG) into phosphoenolpyruvate (PEP). It is essential for the degradation of carbohydrates via glycolysis. The chain is Enolase from Haemophilus influenzae (strain ATCC 51907 / DSM 11121 / KW20 / Rd).